We begin with the raw amino-acid sequence, 307 residues long: Putative flagellar export/assembly protein LafU (307 aa).

A helical transmembrane segment spans residues 32-54; sequence AWKVAFADFTLAMMALFMTLWIV. Positions 87–108 are disordered; the sequence is SPSHPPKPATVAAPEETEKKAR. Positions 154–272 constitute an OmpA-like domain; sequence LRVLIKDDQN…RIEIMVLTKS (119 aa).

This sequence belongs to the MotB family.

It is found in the cell inner membrane. Part of the flagellar gene cluster Flag-2. However, the Flag-2 flagellar system could be inactive in strain 042 due to a frameshift in lfgC. This chain is Putative flagellar export/assembly protein LafU, found in Escherichia coli O44:H18 (strain 042 / EAEC).